Here is a 426-residue protein sequence, read N- to C-terminus: MKLQKPKGTQDILPVAAAKWQYVEDVARETFKQYHYGEIRTPMFEHYEVISRSVGDTTDIVTKEMYDFYDKGDRHITLRPEGTAPVVRSYVENKLFAPEVQKPVKLYYIGSMFRYERPQVGRSREFHQIGVECFGSANPATDVETIAMAYHLFERLGIKGVTLHLNSLGNAASRAAYRQALIDYLSPMRETLSKDSQRRLDENPLRVLDSKEKEDKIAVANAPSILDYLDEDSQAHFDAVRSMLEALAIPYVIDTNMVRGLDYYNHTIFEFITEVNQSELTICAGGRYDGLVEYFGGPATPGFGFGLGLERLLLILDKQGVELPVEEGLDVYIAVLGADANVAALALTQAIRRQGFTVERDYLGRKIKAQFKSADTFKAKVVITLGESEIKAGQAVLKHNQTRQEMTVSFDQIQTDFASIFAECVQ.

It belongs to the class-II aminoacyl-tRNA synthetase family. Homodimer.

It localises to the cytoplasm. It catalyses the reaction tRNA(His) + L-histidine + ATP = L-histidyl-tRNA(His) + AMP + diphosphate + H(+). This Streptococcus equi subsp. zooepidemicus (strain H70) protein is Histidine--tRNA ligase.